Reading from the N-terminus, the 1445-residue chain is ABC-type transporter FGSG_00046 (1445 aa).

A run of 11 helical transmembrane segments spans residues Leu-21–Val-41, Leu-77–Leu-97, Pro-119–Val-138, Ile-150–Leu-170, Glu-187–Gly-207, Thr-255–Leu-277, Tyr-297–Ala-317, Leu-368–Leu-388, Val-392–Leu-412, Val-481–Met-501, and Ser-520–Phe-540. Positions Gly-259–Ser-541 constitute an ABC transmembrane type-1 1 domain. The region spanning Ile-595–Arg-821 is the ABC transporter 1 domain. Gly-627–Ser-634 provides a ligand contact to ATP. Positions Arg-803 to Ala-850 are disordered. A compositionally biased stretch (basic and acidic residues) spans Asn-824 to His-835. 6 helical membrane passes run Gly-868 to Phe-888, Ile-912 to Phe-932, Ile-1004 to Met-1024, Ser-1026 to Ile-1046, Leu-1116 to Ile-1136, and Ile-1147 to Trp-1167. One can recognise an ABC transmembrane type-1 2 domain in the interval His-974–Ala-1173. Positions Ile-1210 to Ser-1441 constitute an ABC transporter 2 domain. Residue Gly-1244 to Thr-1251 participates in ATP binding.

It belongs to the ABC transporter superfamily. ABCC family.

The protein localises to the cell membrane. Functionally, ABC-type transporter; part of the gene cluster that mediates the biosynthesis of gramillins A and B, bicyclic lipopeptides that induce cell death in maize leaves but not in wheat leaves. May be involved in the secretion of gramillins. The chain is ABC-type transporter FGSG_00046 from Gibberella zeae (strain ATCC MYA-4620 / CBS 123657 / FGSC 9075 / NRRL 31084 / PH-1) (Wheat head blight fungus).